Reading from the N-terminus, the 220-residue chain is Small ribosomal subunit protein uS3 (220 aa).

The KH type-2 domain maps to 38–106; the sequence is IRKYVKGRLK…RVHININEIK (69 aa).

The protein belongs to the universal ribosomal protein uS3 family. As to quaternary structure, part of the 30S ribosomal subunit. Forms a tight complex with proteins S10 and S14.

In terms of biological role, binds the lower part of the 30S subunit head. Binds mRNA in the 70S ribosome, positioning it for translation. In Brevibacillus brevis (strain 47 / JCM 6285 / NBRC 100599), this protein is Small ribosomal subunit protein uS3.